The primary structure comprises 440 residues: Branched-chain amino acid permease BrnQ (440 aa).

12 consecutive transmembrane segments (helical) span residues 9-29, 46-66, 80-100, 121-141, 149-169, 196-216, 227-247, 284-304, 321-341, 348-368, 378-398, and 414-434; these read YIII…NLIF, AGFL…FVFS, PVFG…FFAI, SPVS…LLSL, IVGK…VAVA, GYLT…VNAL, LIVV…VMYT, ILLG…LITA, IAVV…TQLI, LLTM…HSVF, SLLF…GIKI, and IGLG…ILSI.

Belongs to the branched chain amino acid transporter family.

It is found in the cell membrane. Its function is as follows. Branched-chain amino acid transport system which is involved in the uptake of isoleucine and valine. Probably does not transport leucine. Together with BcaP and BraB, plays an important role in the activation of CodY, a branched-chain amino acid-responsive transcriptional regulator that controls the expression of several dozen transcription units in B.subtilis. In Bacillus subtilis (strain 168), this protein is Branched-chain amino acid permease BrnQ.